The chain runs to 511 residues: Centrosomal protein CCDC61 (511 aa).

Position 1 is an N-acetylmethionine (Met1). The segment at 1–143 is head domain; that stretch reads MDQPAGLQVD…PLPLPYQGKP (143 aa). 2 coiled-coil regions span residues 176 to 203 and 246 to 273; these read IWHL…SREE and SRRL…LNSE. Thr283 carries the phosphothreonine modification. Disordered stretches follow at residues 284-413 and 429-476; these read LPPV…DSFR and SHSV…GGWV. Residues 290–302 show a composition bias toward basic and acidic residues; sequence REGRASSSRERST. Ser330 and Ser332 each carry phosphoserine. The segment covering 360–369 has biased composition (low complexity); it reads KQQQQQRNRM. 2 positions are modified to phosphoserine: Ser371 and Ser374. The span at 433–442 shows a compositional bias: basic residues; that stretch reads SRSRRCRGRG. Position 446 is a phosphoserine (Ser446). The span at 449-458 shows a compositional bias: polar residues; sequence PWSRSKTKST. Position 472 is a phosphoserine (Ser472).

This sequence belongs to the CCDC61 family. Forms homodimers (via head domain). Interacts with CEP170. Interacts with PCM1 and CEP131. Binds tubulin.

It localises to the cytoplasm. Its subcellular location is the cytoskeleton. It is found in the microtubule organizing center. The protein localises to the centrosome. The protein resides in the centriolar satellite. It localises to the cilium basal body. Its function is as follows. Microtubule-binding centrosomal protein required for centriole cohesion, independently of the centrosome-associated protein/CEP250 and rootletin/CROCC linker. In interphase, required for anchoring microtubule at the mother centriole subdistal appendages and for centrosome positioning. During mitosis, may be involved in spindle assembly and chromatin alignment by regulating the organization of spindle microtubules into a symmetrical structure. Plays a non-essential role in ciliogenesis. The polypeptide is Centrosomal protein CCDC61 (Mus musculus (Mouse)).